A 642-amino-acid polypeptide reads, in one-letter code: 1-deoxy-D-xylulose-5-phosphate synthase (642 aa).

Residues histidine 79 and 120–122 (AHS) contribute to the thiamine diphosphate site. Residue aspartate 151 participates in Mg(2+) binding. Thiamine diphosphate is bound by residues 152–153 (GS), asparagine 180, tyrosine 290, and glutamate 372. Position 180 (asparagine 180) interacts with Mg(2+).

It belongs to the transketolase family. DXPS subfamily. Homodimer. It depends on Mg(2+) as a cofactor. Thiamine diphosphate serves as cofactor.

The enzyme catalyses D-glyceraldehyde 3-phosphate + pyruvate + H(+) = 1-deoxy-D-xylulose 5-phosphate + CO2. It functions in the pathway metabolic intermediate biosynthesis; 1-deoxy-D-xylulose 5-phosphate biosynthesis; 1-deoxy-D-xylulose 5-phosphate from D-glyceraldehyde 3-phosphate and pyruvate: step 1/1. Functionally, catalyzes the acyloin condensation reaction between C atoms 2 and 3 of pyruvate and glyceraldehyde 3-phosphate to yield 1-deoxy-D-xylulose-5-phosphate (DXP). The chain is 1-deoxy-D-xylulose-5-phosphate synthase from Beijerinckia indica subsp. indica (strain ATCC 9039 / DSM 1715 / NCIMB 8712).